A 43-amino-acid polypeptide reads, in one-letter code: Subtilosin-A (43 aa).

Residues 1 to 8 (MKKAVIVE) constitute a propeptide that is removed on maturation. Positions 9 to 43 (NKGCATCSIGAACLVDGPIPDFEIAGATGLFGLWG) form a cross-link, cyclopeptide (Asn-Gly). Residues 12-39 (CATCSIGAACLVDGPIPDFEIAGATGLF) constitute a cross-link (2-cysteinyl-D-phenylalanine (Cys-Phe)). The 2-cysteinyl-D-allo-threonine (Cys-Thr) cross-link spans 15 to 36 (CSIGAACLVDGPIPDFEIAGAT). Positions 21–30 (CLVDGPIPDF) form a cross-link, 2-cysteinyl-L-phenylalanine (Cys-Phe).

The protein belongs to the bacteriocin class V family. In terms of processing, this sactipeptide undergoes unique processing steps that include proteolytic cleavage after Glu-8, and covalent linkage of the alpha-amino of Asn-9 with the carboxyl of Gly-43 to form a cyclopeptide. Thioether cross-links are formed between cysteines and the alpha-carbons of other amino acids, Cys-12 to Phe-39, Cys-15 to Thr-36, and Cys-21 to Phe-30. In forming these cross-links, Thr-36 and Phe-39 are converted to D-amino acids. Propeptide cleavage and cyclopeptide formation only occur after all 3 thioether cross-links are formed.

It localises to the secreted. Its function is as follows. Has bacteriocidal activity against some Gram-positive bacteria such as Listeria, some species of Bacillus and E.faecium. A single mutation (Thr-14-Ile) confers hemolytic activity against rabbit and human blood. This Bacillus subtilis (strain 168) protein is Subtilosin-A (sboA).